A 78-amino-acid polypeptide reads, in one-letter code: Large ribosomal subunit protein bL28 (78 aa).

The segment at 1–23 is disordered; it reads MSRVCQVTGKKPMVGNNRSHAKN.

Belongs to the bacterial ribosomal protein bL28 family.

The protein is Large ribosomal subunit protein bL28 of Shewanella sediminis (strain HAW-EB3).